The sequence spans 460 residues: C4-dicarboxylate transport protein (460 aa).

The next 9 helical transmembrane spans lie at Ser-20–Pro-40, Leu-56–Met-76, Tyr-88–Val-108, Ile-153–Gly-173, Ile-200–Ile-220, Leu-234–Cys-254, Val-301–Leu-321, Ile-342–Gly-362, and Ile-364–Ile-384. The interval Pro-438–Val-460 is disordered.

It belongs to the dicarboxylate/amino acid:cation symporter (DAACS) (TC 2.A.23) family.

The protein localises to the cell inner membrane. Responsible for the transport of dicarboxylates such as succinate, fumarate, and malate from the periplasm across the membrane. This Pseudomonas savastanoi pv. phaseolicola (strain 1448A / Race 6) (Pseudomonas syringae pv. phaseolicola (strain 1448A / Race 6)) protein is C4-dicarboxylate transport protein.